The chain runs to 57 residues: Large ribosomal subunit protein bL32 (57 aa).

The segment at 1-23 is disordered; the sequence is MAVPARHTSSAKKNRRRTHYKLT. The span at 9 to 20 shows a compositional bias: basic residues; sequence SSAKKNRRRTHY.

This sequence belongs to the bacterial ribosomal protein bL32 family.

The sequence is that of Large ribosomal subunit protein bL32 from Lactococcus lactis subsp. cremoris (strain MG1363).